Reading from the N-terminus, the 78-residue chain is Large ribosomal subunit protein eL20 (78 aa).

This sequence belongs to the eukaryotic ribosomal protein eL20 family. As to quaternary structure, part of the 50S ribosomal subunit. Binds 23S rRNA.

The chain is Large ribosomal subunit protein eL20 from Pyrobaculum islandicum (strain DSM 4184 / JCM 9189 / GEO3).